A 221-amino-acid polypeptide reads, in one-letter code: Protein myomaker (221 aa).

The Extracellular segment spans residues Met-1–Thr-3. A helical transmembrane segment spans residues Val-4–Ile-24. Over Ala-25 to Arg-29 the chain is Cytoplasmic. The helical transmembrane segment at Phe-30–Cys-50 threads the bilayer. Topologically, residues Asp-51 to Asp-64 are extracellular. Residues Ile-65–Leu-85 form a helical membrane-spanning segment. Residues Ala-86–Arg-93 lie on the Cytoplasmic side of the membrane. A helical transmembrane segment spans residues Ser-94–His-110. The Extracellular segment spans residues Asp-111–Trp-113. A helical transmembrane segment spans residues Gly-114–Leu-134. Residues Lys-135 to Gln-153 are Cytoplasmic-facing. Residues Ile-154 to Trp-174 traverse the membrane as a helical segment. Residue Asp-175 is a topological domain, extracellular. A helical membrane pass occupies residues Tyr-176–Pro-196. The Cytoplasmic portion of the chain corresponds to Lys-197 to Val-221. S-palmitoyl cysteine attachment occurs at residues Cys-217 and Cys-218.

The protein belongs to the TMEM8 family. In terms of assembly, interacts with MYMX. Post-translationally, palmitoylated at the C-terminus; palmitoylation promotes localization to the Golgi apparatus. Specifically expressed in skeletal muscle during embryogenesis and adult muscle regeneration.

The protein localises to the cell membrane. Its subcellular location is the golgi apparatus membrane. Myoblast-specific protein that mediates myoblast fusion, an essential step for the formation of multi-nucleated muscle fibers. Actively participates in the membrane fusion reaction by mediating the mixing of cell membrane lipids (hemifusion) upstream of MYMX. Acts independently of MYMX. Involved in skeletal muscle regeneration in response to injury by mediating the fusion of satellite cells, a population of muscle stem cells, with injured myofibers. Also involved in skeletal muscle hypertrophy, probably by mediating the fusion of satellite cells with myofibers. The chain is Protein myomaker from Mus musculus (Mouse).